The following is a 387-amino-acid chain: MKWLLLLSLVALSECLYKVSLIKKKSLRKNLIEHGLLKDFLKNNTLDPASKYFPQGEAATMIANQPLVNYLDMEYFGTIGIGTPAQEFTVIFDTGSSNLWVPSIYCSSPACTNHNRFNPQESSTYQATSQTLSIAYGTGSMTGILGYDTVQVGGIADTNQIFGLSETEPGSFLYYSPFDGILGLAYPSISSSGATPVFDNIWNQDLVSQDLFSVYLSSNDQSGSVVMFGGIDSSYYTGSLNWVPVSAEGYWQITVDSITMNGEAIACAEGCQAIVDTGTSLLSGPTSPIANIQSYIGASENSNGEMVVSCSAISSLPDIVFTINGIQYPVPASAYILQDEGGCTSGFQGMNIPTAYGELWILGDVFIRQYFAVFDRANNQVGLAPVA.

Residues 1–15 (MKWLLLLSLVALSEC) form the signal peptide. The propeptide at 16–61 (LYKVSLIKKKSLRKNLIEHGLLKDFLKNNTLDPASKYFPQGEAATM) is activation peptide. One can recognise a Peptidase A1 domain in the interval 75-384 (YFGTIGIGTP…DRANNQVGLA (310 aa)). The active site involves D93. A disulfide bridge connects residues C106 and C111. A Phosphoserine modification is found at S129. The cysteines at positions 267 and 271 are disulfide-linked. Residue D276 is part of the active site. Cysteines 310 and 343 form a disulfide.

Belongs to the peptidase A1 family.

Its subcellular location is the secreted. It catalyses the reaction Preferential cleavage: hydrophobic, preferably aromatic, residues in P1 and P1' positions. Cleaves 1-Phe-|-Val-2, 4-Gln-|-His-5, 13-Glu-|-Ala-14, 14-Ala-|-Leu-15, 15-Leu-|-Tyr-16, 16-Tyr-|-Leu-17, 23-Gly-|-Phe-24, 24-Phe-|-Phe-25 and 25-Phe-|-Tyr-26 bonds in the B chain of insulin.. Inhibited by pepstatin. Functionally, shows particularly broad specificity; although bonds involving phenylalanine and leucine are preferred, many others are also cleaved to some extent. The polypeptide is Pepsin A (PGA) (Callithrix jacchus (White-tufted-ear marmoset)).